Here is a 262-residue protein sequence, read N- to C-terminus: tRNA pseudouridine synthase A (262 aa).

Asp51 (nucleophile) is an active-site residue. Residue Tyr109 coordinates substrate.

It belongs to the tRNA pseudouridine synthase TruA family. Homodimer.

The enzyme catalyses uridine(38/39/40) in tRNA = pseudouridine(38/39/40) in tRNA. Its function is as follows. Formation of pseudouridine at positions 38, 39 and 40 in the anticodon stem and loop of transfer RNAs. The polypeptide is tRNA pseudouridine synthase A (Aliivibrio fischeri (strain ATCC 700601 / ES114) (Vibrio fischeri)).